The following is a 95-amino-acid chain: Aspartyl/glutamyl-tRNA(Asn/Gln) amidotransferase subunit C (95 aa).

The protein belongs to the GatC family. Heterotrimer of A, B and C subunits.

The catalysed reaction is L-glutamyl-tRNA(Gln) + L-glutamine + ATP + H2O = L-glutaminyl-tRNA(Gln) + L-glutamate + ADP + phosphate + H(+). The enzyme catalyses L-aspartyl-tRNA(Asn) + L-glutamine + ATP + H2O = L-asparaginyl-tRNA(Asn) + L-glutamate + ADP + phosphate + 2 H(+). Functionally, allows the formation of correctly charged Asn-tRNA(Asn) or Gln-tRNA(Gln) through the transamidation of misacylated Asp-tRNA(Asn) or Glu-tRNA(Gln) in organisms which lack either or both of asparaginyl-tRNA or glutaminyl-tRNA synthetases. The reaction takes place in the presence of glutamine and ATP through an activated phospho-Asp-tRNA(Asn) or phospho-Glu-tRNA(Gln). The chain is Aspartyl/glutamyl-tRNA(Asn/Gln) amidotransferase subunit C from Rhodopseudomonas palustris (strain BisA53).